Reading from the N-terminus, the 158-residue chain is MADIQTERAYQKQPTIFQNKKRVLLGETGKEKLPRYYKNIGLGFKTPKEAIEGTYIDKKCPFTGNVSIRGRILSGVVTKMKMQRTIVIRRDYLHYIRKYNRFEKRHKNMSVHLSPCFRDVHIGDIVTVGECRPLSKTVRFNVLKVTKAAGTKKQFQKF.

The residue at position 2 (A2) is an N-acetylalanine. R22 is subject to Citrulline. N6-acetyllysine is present on residues K38, K45, and K58. Residue C60 is the site of S-palmitoyl cysteine attachment. S67 carries the phosphoserine modification. R69 bears the Omega-N-methylarginine mark. S110 carries the phosphoserine modification.

It belongs to the universal ribosomal protein uS17 family. As to quaternary structure, component of the small ribosomal subunit. Part of the small subunit (SSU) processome, composed of more than 70 proteins and the RNA chaperone small nucleolar RNA (snoRNA) U3. Citrullinated by PADI4.

Its subcellular location is the cytoplasm. The protein resides in the nucleus. It localises to the nucleolus. Its function is as follows. Component of the small ribosomal subunit. The ribosome is a large ribonucleoprotein complex responsible for the synthesis of proteins in the cell. Part of the small subunit (SSU) processome, first precursor of the small eukaryotic ribosomal subunit. During the assembly of the SSU processome in the nucleolus, many ribosome biogenesis factors, an RNA chaperone and ribosomal proteins associate with the nascent pre-rRNA and work in concert to generate RNA folding, modifications, rearrangements and cleavage as well as targeted degradation of pre-ribosomal RNA by the RNA exosome. The chain is Small ribosomal subunit protein uS17 (RPS11) from Canis lupus familiaris (Dog).